We begin with the raw amino-acid sequence, 385 residues long: Type III polyketide synthase C (385 aa).

CoA is bound at residue 56 to 63; it reads KLQHLCKS. Cys165 (nucleophile) is an active-site residue. 217-218 contacts substrate; the sequence is GD. Residues Leu267, 307 to 310, and Ala310 each bind CoA; that span reads GGPA.

Belongs to the thiolase-like superfamily. Chalcone/stilbene synthases family. Homodimer.

It localises to the endoplasmic reticulum. The protein operates within secondary metabolite biosynthesis; flavonoid biosynthesis. Its function is as follows. Plant type III polyketide synthases (PKSs) that catalyzes the condensation of malonyl-CoA units with various CoA ester starter molecules to generate a diverse array of natural products including long-chain alkyl alpha-pyrones. The chain is Type III polyketide synthase C from Arabidopsis thaliana (Mouse-ear cress).